A 357-amino-acid chain; its full sequence is Eugenol O-methyltransferase (357 aa).

5 residues coordinate S-adenosyl-L-methionine: G203, D226, D246, M247, and K260. H264 acts as the Proton acceptor in catalysis.

The protein belongs to the class I-like SAM-binding methyltransferase superfamily. Cation-independent O-methyltransferase family. COMT subfamily. In terms of tissue distribution, specifically expressed in the peltate glandular trichomes on the surface of the young basil leaves.

It carries out the reaction (E)-isoeugenol + S-adenosyl-L-methionine = (E)-isomethyleugenol + S-adenosyl-L-homocysteine + H(+). It functions in the pathway aromatic compound metabolism; phenylpropanoid biosynthesis. Phenylpropene O-methyltransferase that catalyzes the methylation of the para-4-hydroxyl of eugenol to methyleugenol. Can also convert chavicol to methylchavicol but with less affinity. This chain is Eugenol O-methyltransferase (EOMT1), found in Ocimum basilicum (Sweet basil).